The sequence spans 229 residues: Ribonuclease 3 (229 aa).

The RNase III domain maps to 5–127; the sequence is LNRLERKLGH…LIGAIYLDAG (123 aa). Position 40 (E40) interacts with Mg(2+). Residue D44 is part of the active site. Mg(2+) contacts are provided by D113 and E116. E116 is an active-site residue. In terms of domain architecture, DRBM spans 154-224; the sequence is DPKTRLQEFL…AAAALVALGV (71 aa).

This sequence belongs to the ribonuclease III family. Homodimer. Mg(2+) is required as a cofactor.

The protein localises to the cytoplasm. The catalysed reaction is Endonucleolytic cleavage to 5'-phosphomonoester.. Digests double-stranded RNA. Involved in the processing of primary rRNA transcript to yield the immediate precursors to the large and small rRNAs (23S and 16S). Processes some mRNAs, and tRNAs when they are encoded in the rRNA operon. Processes pre-crRNA and tracrRNA of type II CRISPR loci if present in the organism. The protein is Ribonuclease 3 of Azotobacter vinelandii (strain DJ / ATCC BAA-1303).